The primary structure comprises 24 residues: MTTRGFSCLLLLIREIDLSAKRRI.

This sequence belongs to the humanin family. Expressed in mature brain, thyroid gland and testis.

It is found in the secreted. The protein resides in the cytoplasm. In terms of biological role, plays a role as a neuroprotective and antiapoptotic factor. The sequence is that of Humanin-like 10 from Homo sapiens (Human).